Here is a 543-residue protein sequence, read N- to C-terminus: Lysosomal cobalamin transport escort protein LMBD1 (543 aa).

At 1–12 (MAAAAAGAASAE) the chain is on the extracellular side. The helical transmembrane segment at 13–33 (LVIGWCIFGLLLLAILAFCWI) threads the bilayer. At 34–52 (YVRKYQSQRESEVVSTITA) the chain is on the cytoplasmic side. The chain crosses the membrane as a helical span at residues 53–73 (IFSLAIALITSALLPVDIFLV). Residues 74 to 102 (SYMKNQNGTFKDWANGNVSRQIEDTVLYG) lie on the Extracellular side of the membrane. Asn-80 and Asn-90 each carry an N-linked (GlcNAc...) asparagine glycan. The helical transmembrane segment at 103–123 (YYTLYSVILFCVFFWIPFVYF) threads the bilayer. Residues 124-146 (YYEEKDDDDTGKCTQVKMALKYT) lie on the Cytoplasmic side of the membrane. A helical transmembrane segment spans residues 147–167 (LGFVVICALLLLVGAFVPLNL). At 168–190 (PDNKNSTEWEKVKFLFEELGSSH) the chain is on the extracellular side. The N-linked (GlcNAc...) asparagine glycan is linked to Asn-172. The chain crosses the membrane as a helical span at residues 191–211 (GLAALSFSISSLTLVGMLAAI). Residues 212-307 (IYTAYGMSAL…KFCGALRPLK (96 aa)) lie on the Cytoplasmic side of the membrane. Residues 234–237 (YERL) carry the YERL motif; mediates interaction with adapter protein complex 2 and is essential for its function in clathrin-mediated endocytosis of INSR motif. At Thr-240 the chain carries Phosphothreonine. Residues 296–299 (WTKF) carry the WTKF motif; mediates interaction with adapter protein complex 2 and is essential for its function in clathrin-mediated endocytosis of INSR motif. The helical transmembrane segment at 308–328 (IIWGIFFIFVALLFVISLFLS) threads the bilayer. The Extracellular segment spans residues 329 to 366 (NLDKALHSAGIDSGFIIFGANLSNPLNMLLPLLQTVFP). N-linked (GlcNAc...) asparagine glycosylation occurs at Asn-349. The chain crosses the membrane as a helical span at residues 367 to 387 (LDYILITIIIMYFIFTSMAGI). Over 388 to 410 (RNIGIWFFWIRLYKIRRGRTRPQ) the chain is Cytoplasmic. The helical transmembrane segment at 411-431 (ALLFLCMILLLIVLHTSYMIY) threads the bilayer. The Extracellular segment spans residues 432–488 (SLAPQYVMYGSQNYLIESNMTYNDHRGNSSLSVPKRCDADAPEDQCTVTRTYLFLHK). N-linked (GlcNAc...) asparagine glycosylation is found at Asn-450 and Asn-459. A helical membrane pass occupies residues 489 to 509 (FWFFSAAYYFGNWAFLGVFIV). The Cytoplasmic portion of the chain corresponds to 510 to 543 (GFIVSCCKGKKSVLERVDEDDSDLSDDEPSLYSV). Ser-531 and Ser-534 each carry phosphoserine.

The protein belongs to the LIMR family. LMBRD1 subfamily. As to quaternary structure, interacts with ABCD4; this interaction induces the translocation of ABCD4 from the endoplasmic reticulum to the lysosome. Interacts with ABCD4 and MMACHC; this interaction ensures the transport of cobalamin from the lysosome to the cytoplasm. Interacts with INSR, adapter protein complex 2 and clathrin heavy chain. N-glycosylated.

The protein resides in the endoplasmic reticulum membrane. The protein localises to the lysosome membrane. Its subcellular location is the cell membrane. It is found in the cytoplasmic vesicle. It localises to the clathrin-coated vesicle. Functionally, lysosomal membrane chaperone required to export cobalamin (vitamin B12) from the lysosome to the cytosol, allowing its conversion to cofactors. Targets ABCD4 transporter from the endoplasmic reticulum to the lysosome. Then forms a complex with lysosomal ABCD4 and cytoplasmic MMACHC to transport cobalamin across the lysosomal membrane. Acts as an adapter protein which plays an important role in mediating and regulating the internalization of the insulin receptor (INSR). Involved in clathrin-mediated endocytosis of INSR via its interaction with adapter protein complex 2. Essential for the initiation of gastrulation and early formation of mesoderm structures during embryogenesis. The sequence is that of Lysosomal cobalamin transport escort protein LMBD1 (LMBRD1) from Bos taurus (Bovine).